We begin with the raw amino-acid sequence, 199 residues long: Recombination protein RecR (199 aa).

The C4-type zinc finger occupies 58–73 (CSVCGNLTDTDVCPLC). The Toprim domain maps to 81–176 (SVICVVEDPR…KTTRIAHGIP (96 aa)).

Belongs to the RecR family.

In terms of biological role, may play a role in DNA repair. It seems to be involved in an RecBC-independent recombinational process of DNA repair. It may act with RecF and RecO. The protein is Recombination protein RecR of Acetivibrio thermocellus (strain ATCC 27405 / DSM 1237 / JCM 9322 / NBRC 103400 / NCIMB 10682 / NRRL B-4536 / VPI 7372) (Clostridium thermocellum).